A 387-amino-acid chain; its full sequence is Putative 8-amino-7-oxononanoate synthase (387 aa).

Arg19 contributes to the substrate binding site. 107–108 (GY) provides a ligand contact to pyridoxal 5'-phosphate. Substrate is bound at residue His132. Pyridoxal 5'-phosphate contacts are provided by residues Ser180, 206 to 209 (DEAH), and 237 to 240 (TFGK). The residue at position 240 (Lys240) is an N6-(pyridoxal phosphate)lysine. Residue Thr354 coordinates substrate.

The protein belongs to the class-II pyridoxal-phosphate-dependent aminotransferase family. BioF subfamily. Homodimer. Pyridoxal 5'-phosphate is required as a cofactor.

It catalyses the reaction 6-carboxyhexanoyl-[ACP] + L-alanine + H(+) = (8S)-8-amino-7-oxononanoate + holo-[ACP] + CO2. It functions in the pathway cofactor biosynthesis; biotin biosynthesis. Functionally, catalyzes the decarboxylative condensation of pimeloyl-[acyl-carrier protein] and L-alanine to produce 8-amino-7-oxononanoate (AON), [acyl-carrier protein], and carbon dioxide. This chain is Putative 8-amino-7-oxononanoate synthase (bioF), found in Pasteurella multocida (strain Pm70).